Consider the following 420-residue polypeptide: Protein BDLF2 (420 aa).

2 disordered regions span residues 1–21 and 64–129; these read MVDE…SREE and AAAV…GGQR. Residues 1–184 lie on the Intravirion side of the membrane; it reads MVDEQVAVEH…AETLAEPPRC (184 aa). A compositionally biased stretch (low complexity) spans 90–108; sequence TKTNTQDQNQNQTTRTRTN. The helical; Signal-anchor for type II membrane protein transmembrane segment at 185–205 threads the bilayer; sequence FMLSFVFIYYCCYLAFLALLA. At 206 to 420 the chain is on the virion surface side; the sequence is FGFNPLFLPS…LEEVMYVMVQ (215 aa). 6 N-linked (GlcNAc...) asparagine; by host glycosylation sites follow: N258, N264, N300, N304, N371, and N384.

It belongs to the herpesviridae BDLF2 family. Interacts with BMRF2.

The protein localises to the virion membrane. Rearranges cellular actin to increase intercellular contacts and thereby promote virus cell-to-cell spreading. Induce the outgrowth of long, branched plasma membrane fronds to create intercellular network for virion traffic. The fronds are actin based and RhoA-dependent. The chain is Protein BDLF2 from Homo sapiens (Human).